The chain runs to 176 residues: ATP-dependent protease subunit HslV (176 aa).

Threonine 2 is a catalytic residue. Na(+)-binding residues include glycine 157, cysteine 160, and threonine 163.

This sequence belongs to the peptidase T1B family. HslV subfamily. In terms of assembly, a double ring-shaped homohexamer of HslV is capped on each side by a ring-shaped HslU homohexamer. The assembly of the HslU/HslV complex is dependent on binding of ATP.

Its subcellular location is the cytoplasm. It catalyses the reaction ATP-dependent cleavage of peptide bonds with broad specificity.. Allosterically activated by HslU binding. Functionally, protease subunit of a proteasome-like degradation complex believed to be a general protein degrading machinery. The sequence is that of ATP-dependent protease subunit HslV from Pseudomonas fluorescens (strain ATCC BAA-477 / NRRL B-23932 / Pf-5).